Reading from the N-terminus, the 863-residue chain is Facilitated trehalose transporter Tret1 (863 aa).

A disordered region spans residues Met-1–Thr-208. Residues Met-1–Tyr-398 are Cytoplasmic-facing. Over residues Lys-28–Glu-46 the composition is skewed to basic and acidic residues. Over residues Ser-47 to Asp-59 the composition is skewed to polar residues. Over residues Ala-72–Leu-85 the composition is skewed to low complexity. 2 stretches are compositionally biased toward polar residues: residues Pro-114–Gly-129 and Lys-177–Ala-187. 3 positions are modified to phosphoserine: Ser-254, Ser-255, and Ser-256. Residues Val-286–Ile-307 are disordered. Residues Ser-326 and Ser-328 each carry the phosphoserine modification. Residues Phe-332–Arg-354 form a disordered region. Positions Arg-336 to Thr-347 are enriched in polar residues. The helical transmembrane segment at Ile-399–Ala-419 threads the bilayer. Over Ser-420–Ser-446 the chain is Extracellular. An N-linked (GlcNAc...) asparagine glycan is attached at Asn-434. The chain crosses the membrane as a helical span at residues Trp-447–Ile-467. Topologically, residues Glu-468–Thr-479 are cytoplasmic. A helical membrane pass occupies residues Ala-480–Leu-500. The Extracellular segment spans residues Cys-501–Arg-503. A helical transmembrane segment spans residues Phe-504–Thr-524. At Val-525 to Arg-530 the chain is on the cytoplasmic side. The helical transmembrane segment at Gly-531 to Ala-551 threads the bilayer. Over Gly-552–Ser-558 the chain is Extracellular. The helical transmembrane segment at Met-559–Pro-579 threads the bilayer. The Cytoplasmic portion of the chain corresponds to Glu-580–Pro-642. A helical transmembrane segment spans residues Leu-643–Phe-663. Topologically, residues Tyr-664–Asn-679 are extracellular. Residues Val-680–Ile-700 form a helical membrane-spanning segment. Over Asp-701–Lys-706 the chain is Cytoplasmic. A helical membrane pass occupies residues Ile-707–Phe-727. Over Tyr-728 to Cys-746 the chain is Extracellular. The helical transmembrane segment at Phe-747–Gly-767 threads the bilayer. The Cytoplasmic portion of the chain corresponds to Glu-768–Lys-773. A helical transmembrane segment spans residues Ile-774–Thr-794. Over Lys-795–His-807 the chain is Extracellular. Residues Gly-808–Val-828 form a helical membrane-spanning segment. Over Pro-829–Met-863 the chain is Cytoplasmic. Phosphoserine is present on residues Ser-851 and Ser-852.

Belongs to the major facilitator superfamily. Sugar transporter (TC 2.A.1.1) family. Trehalose transporter subfamily.

The protein localises to the cell membrane. Functionally, low-capacity facilitative transporter for trehalose. Does not transport maltose, sucrose or lactose. Mediates the bidirectional transfer of trehalose. Responsible for the transport of trehalose synthesized in the fat body and the incorporation of trehalose into other tissues that require a carbon source, thereby regulating trehalose levels in the hemolymph. This Drosophila mojavensis (Fruit fly) protein is Facilitated trehalose transporter Tret1.